The sequence spans 378 residues: MSDHEDLNKAMGHWNASESYQLNPASVIVSVVFSLIFLLGTIGNSLVLAVLLRSGQVGYNTTNLFILNLSVADFFFIIFCVPFQATIYSLEGWVFGSFMCKVVHFFINLTMYASSFTLAAVSVDRYLAIRYPLRSRELRTPCNAVVAMVVIWGLSLVFAGPYLSYYDLIDFENSNVCVPGWEEHNRKVLDTCTFVFGYVIPVLIVSLSYTRTIKYLWTAVDPLDGMSESKRAKRKVTKMIIIVTVLFCICWLPYHVVILCYLYGDFPFNQTTYAFRLLSHCMAYANSCLNPIVYALVSKHFRKGFKKVFSCILSKKGRNKVHVVNVANTVPGFEAGSTEVSQMNEENARQNESEMVNRPLAQPQDTTMTITLPFQNQP.

Residues 1 to 30 lie on the Extracellular side of the membrane; the sequence is MSDHEDLNKAMGHWNASESYQLNPASVIVS. The chain crosses the membrane as a helical span at residues 31–51; the sequence is VVFSLIFLLGTIGNSLVLAVL. The Cytoplasmic portion of the chain corresponds to 52-62; the sequence is LRSGQVGYNTT. Residues 63–83 traverse the membrane as a helical segment; sequence NLFILNLSVADFFFIIFCVPF. Over 84-101 the chain is Extracellular; sequence QATIYSLEGWVFGSFMCK. Cysteine 100 and cysteine 177 form a disulfide bridge. The chain crosses the membrane as a helical span at residues 102–123; that stretch reads VVHFFINLTMYASSFTLAAVSV. At 124–143 the chain is on the cytoplasmic side; it reads DRYLAIRYPLRSRELRTPCN. The chain crosses the membrane as a helical span at residues 144-164; sequence AVVAMVVIWGLSLVFAGPYLS. At 165–187 the chain is on the extracellular side; the sequence is YYDLIDFENSNVCVPGWEEHNRK. Residues 188–208 traverse the membrane as a helical segment; that stretch reads VLDTCTFVFGYVIPVLIVSLS. Over 209–238 the chain is Cytoplasmic; the sequence is YTRTIKYLWTAVDPLDGMSESKRAKRKVTK. A helical membrane pass occupies residues 239-259; that stretch reads MIIIVTVLFCICWLPYHVVIL. Topologically, residues 260–276 are extracellular; sequence CYLYGDFPFNQTTYAFR. A helical membrane pass occupies residues 277–297; sequence LLSHCMAYANSCLNPIVYALV. Residues 298-378 are Cytoplasmic-facing; that stretch reads SKHFRKGFKK…TITLPFQNQP (81 aa). A disordered region spans residues 339 to 362; the sequence is EVSQMNEENARQNESEMVNRPLAQ.

This sequence belongs to the G-protein coupled receptor 1 family. Expressed in neurons in the ventral area of the interpeduncular nucleus (IPN) where expression often overlaps with spx1.

Its subcellular location is the membrane. Its function is as follows. Receptor for the hormone galanin. Receptor for the hormones spexin-1 and spexin-2. This Danio rerio (Zebrafish) protein is Galanin receptor 2b.